A 350-amino-acid chain; its full sequence is Quercetin 2,3-dioxygenase (350 aa).

Positions 1 to 145 are cupin 1; sequence DTSSLIVEDA…FYYLGTNATD (145 aa). Residues His66, His68, and Glu73 each coordinate Cu cation. Residue His66 participates in substrate binding. Glu73 provides a ligand contact to substrate. Asn90 and Asn109 each carry an N-linked (GlcNAc...) asparagine glycan. His112 is a binding site for Cu cation. The N-linked (GlcNAc...) asparagine glycan is linked to Asn142. Residues 146 to 205 form a linker region; it reads TTHTPYIPSSSDSSSTTGPDSSTISTLQSFDVYAELSFTPRTDTVNGTAPANTVWHTGAN. The segment at 148-167 is disordered; the sequence is HTPYIPSSSDSSSTTGPDSS. Low complexity predominate over residues 152 to 167; it reads IPSSSDSSSTTGPDSS. N-linked (GlcNAc...) asparagine glycans are attached at residues Asn191 and Asn248. Residues 206-350 are cupin 2; sequence ALASTAGDPY…WSSVSFPADW (145 aa).

As to quaternary structure, homodimer. Requires Cu cation as cofactor. In terms of processing, the N-linked glycan at Asn-191 consists of Man(5)-GlcNAc(2).

The enzyme catalyses quercetin + O2 = 2-(3,4-dihydroxybenzoyloxy)-4,6-dihydroxybenzoate + CO. It functions in the pathway flavonoid metabolism; quercetin degradation. Its activity is regulated as follows. Inhibited by diethyldithiocarbamate and kojic acid. In terms of biological role, performs the first step in the degradation of the flavonoid quercetin by a dioxygenase reaction. The enzyme catalyzes the cleavage of the O-heteroaromatic ring of the flavonol quercetin yielding the depside 2-protocatechuoyl-phloroglucinol carboxylic acid and carbon monoxide. This involves the remarkable dioxygenolytic cleavage of two carbon-carbon bonds. The sequence is that of Quercetin 2,3-dioxygenase from Aspergillus japonicus.